The following is a 305-amino-acid chain: N-acetylneuraminate lyase (305 aa).

2 residues coordinate aceneuramate: Thr51 and Thr52. Tyr143 (proton donor) is an active-site residue. Lys173 serves as the catalytic Schiff-base intermediate with substrate. Aceneuramate-binding residues include Thr175, Gly197, Asp199, Glu200, and Ser216.

Belongs to the DapA family. NanA subfamily. As to quaternary structure, homotetramer.

The protein localises to the cytoplasm. The catalysed reaction is aceneuramate = aldehydo-N-acetyl-D-mannosamine + pyruvate. The protein operates within amino-sugar metabolism; N-acetylneuraminate degradation. Functionally, catalyzes the cleavage of N-acetylneuraminic acid (sialic acid) to form pyruvate and N-acetylmannosamine via a Schiff base intermediate. It prevents sialic acids from being recycled and returning to the cell surface. Involved in the N-glycolylneuraminic acid (Neu5Gc) degradation pathway. The polypeptide is N-acetylneuraminate lyase (Xenopus tropicalis (Western clawed frog)).